We begin with the raw amino-acid sequence, 145 residues long: Peptide methionine sulfoxide reductase MsrB (145 aa).

The region spanning 4–127 is the MsrB domain; the sequence is SEELKQRIGD…NSAALKFIPY (124 aa). The active-site Nucleophile is C116.

It belongs to the MsrB Met sulfoxide reductase family.

It carries out the reaction L-methionyl-[protein] + [thioredoxin]-disulfide + H2O = L-methionyl-(R)-S-oxide-[protein] + [thioredoxin]-dithiol. The protein is Peptide methionine sulfoxide reductase MsrB of Streptococcus pyogenes serotype M6 (strain ATCC BAA-946 / MGAS10394).